Reading from the N-terminus, the 274-residue chain is Pyrroline-5-carboxylate reductase 3 (274 aa).

An N-acetylalanine modification is found at A2.

This sequence belongs to the pyrroline-5-carboxylate reductase family. As to quaternary structure, homodecamer; composed of 5 homodimers.

It localises to the cytoplasm. The catalysed reaction is L-proline + NADP(+) = (S)-1-pyrroline-5-carboxylate + NADPH + 2 H(+). It catalyses the reaction L-proline + NAD(+) = (S)-1-pyrroline-5-carboxylate + NADH + 2 H(+). It participates in amino-acid biosynthesis; L-proline biosynthesis; L-proline from L-glutamate 5-semialdehyde: step 1/1. In terms of biological role, oxidoreductase that catalyzes the last step in proline biosynthesis, which corresponds to the reduction of pyrroline-5-carboxylate (P5C) to L-proline using NAD(P)H. Proline is synthesized from either glutamate or ornithine; both are converted to P5C, and then to proline via pyrroline-5-carboxylate reductases (PYCRs). PYCR3 is exclusively linked to the biosynthesis of proline from ornithine. In Mus musculus (Mouse), this protein is Pyrroline-5-carboxylate reductase 3.